The chain runs to 151 residues: Large ribosomal subunit protein bL9 (151 aa).

Belongs to the bacterial ribosomal protein bL9 family.

Its function is as follows. Binds to the 23S rRNA. The sequence is that of Large ribosomal subunit protein bL9 from Prochlorococcus marinus (strain MIT 9312).